A 907-amino-acid polypeptide reads, in one-letter code: MDTSSVGVLLSLPVLLQLAAGGGSPRPGTLLRGCPAHCQCEPDGRMLLRVDCSDLGLSELPSNLSVFTSYLDLSMNNISQLPPSPLHSLRFLEELRLAGNALTYIPKGAFAGLYSLKVLMLQNNHLRQVPTEALQNLRSLQSLRLDANRISSVPPSCFSGLHSLRHLWLDDNALTEIPVQAFRSLSALQAMTLALNKIHHIPDYAFGNLSSLVVLHLHNNRIHSLGKKCFDGLHSLETLDLNYNNLDEFPTAVRTLSNLKELGFHSNNIKSIPEKAFVGNPSLITIHFYDNPIQLVGRSAFQHLPELRTLTLNGASQITEFPDLTGTASLESLTLTGAQISSLPQTVCDQLPNLQVLDLSYNLLEDLPSFSVCQKLQKIDLRHNEIYEIQADTFQQLFSLRSLNLAWNKIAIIDPNAFSTLPSLRKLDLSSNRLSSIPVTGLHGLTHLKLTGNHALQSLISSENFPELKVIEMPYAYQCCAFGVCENVYKISNPWSKGDNSTAEDLHKKDAGVFQVQDERDLEDFLLDFEEDLRALHPVRCSPSPGPFKLCEYLFGSWLIRIGVWTIAVLALTCNALVTSTVFRAAVYISSIKLLIGLIAAVNMLMGVSSAVLAGVDAFTFGSFAQHGAWWEQAVGCQVVGFLSIFASESSVFLLTLAALERGWSVKCSAKFETQTPFPSLRATLALCALLAGTVAAVPLLGGSEYSASPLCLPLPFGEPRATGYMVALVLLNSLCFLVMTVAYTRLYCHLEKGDLESMWDCSMVKHVALLLFTNCILHCPVAFLSFSSLLNLTFISPEVIKFILLVIVPLPACLNPLLYILFNPHFKEDLGSLGKQTHFWTRSKHTSLMSINSDDVEKQSCDSTQALVTFTSASIAYDLPSSSGSPPAYPMTESCHLSSVAFVPCL.

The signal sequence occupies residues 1-21; it reads MDTSSVGVLLSLPVLLQLAAG. The Extracellular segment spans residues 22–553; the sequence is GGSPRPGTLL…SPGPFKLCEY (532 aa). In terms of domain architecture, LRRNT spans 33 to 64; that stretch reads GCPAHCQCEPDGRMLLRVDCSDLGLSELPSNL. Intrachain disulfides connect Cys-34-Cys-40 and Cys-38-Cys-52. LRR repeat units follow at residues 44-64, 65-88, 89-112, 114-136, 137-160, 162-184, 185-208, 209-232, 233-256, 257-279, 281-303, 304-327, 328-350, 351-375, 377-396, 397-420, and 421-444; these read GRML…PSNL, SVFT…PLHS, LRFL…AFAG, YSLK…ALQN, LRSL…CFSG, HSLR…AFRS, LSAL…AFGN, LSSL…CFDG, LHSL…VRTL, SNLK…AFVG, PSLI…AFQH, LPEL…LTGT, ASLE…VCDQ, LPNL…VCQK, QKID…TFQQ, LFSL…AFST, and LPSL…GLHG. N-linked (GlcNAc...) asparagine glycosylation is found at Asn-63 and Asn-77. Asn-208 carries an N-linked (GlcNAc...) asparagine glycan. Cys-348 and Cys-373 form a disulfide bridge. Cysteines 479 and 541 form a disulfide. N-linked (GlcNAc...) asparagine glycosylation occurs at Asn-500. The chain crosses the membrane as a helical span at residues 554–574; it reads LFGSWLIRIGVWTIAVLALTC. The LRR 18 repeat unit spans residues 564 to 585; it reads VWTIAVLALTCNALVTSTVFRA. The Cytoplasmic portion of the chain corresponds to 575–593; that stretch reads NALVTSTVFRAAVYISSIK. A helical membrane pass occupies residues 594–614; it reads LLIGLIAAVNMLMGVSSAVLA. Residues 615-638 are Extracellular-facing; sequence GVDAFTFGSFAQHGAWWEQAVGCQ. Residues Cys-637 and Cys-712 are joined by a disulfide bond. Residues 639–659 traverse the membrane as a helical segment; sequence VVGFLSIFASESSVFLLTLAA. Topologically, residues 660–682 are cytoplasmic; it reads LERGWSVKCSAKFETQTPFPSLR. Residues 683-703 traverse the membrane as a helical segment; it reads ATLALCALLAGTVAAVPLLGG. Residues 704 to 723 lie on the Extracellular side of the membrane; sequence SEYSASPLCLPLPFGEPRAT. The chain crosses the membrane as a helical span at residues 724 to 744; the sequence is GYMVALVLLNSLCFLVMTVAY. Residues 745-767 are Cytoplasmic-facing; the sequence is TRLYCHLEKGDLESMWDCSMVKH. The chain crosses the membrane as a helical span at residues 768–788; that stretch reads VALLLFTNCILHCPVAFLSFS. Residues 789 to 802 lie on the Extracellular side of the membrane; sequence SLLNLTFISPEVIK. Asn-792 is a glycosylation site (N-linked (GlcNAc...) asparagine). The chain crosses the membrane as a helical span at residues 803–823; the sequence is FILLVIVPLPACLNPLLYILF. Over 824-907 the chain is Cytoplasmic; that stretch reads NPHFKEDLGS…LSSVAFVPCL (84 aa).

The protein belongs to the G-protein coupled receptor 1 family. Identified in a complex composed of RNF43, LGR5 and RSPO1. Also interacts with other R-spondin ligands, including RSPO2, RSPO3 and RSPO4.

The protein localises to the cell membrane. It localises to the golgi apparatus. The protein resides in the trans-Golgi network membrane. Its function is as follows. Receptor for R-spondins that potentiates the canonical Wnt signaling pathway and acts as a stem cell marker of the intestinal epithelium and the hair follicle. Upon binding to R-spondins (RSPO1, RSPO2, RSPO3 or RSPO4), associates with phosphorylated LRP6 and frizzled receptors that are activated by extracellular Wnt receptors, triggering the canonical Wnt signaling pathway to increase expression of target genes. In contrast to classical G-protein coupled receptors, does not activate heterotrimeric G-proteins to transduce the signal. Involved in the development and/or maintenance of the adult intestinal stem cells during postembryonic development. The chain is Leucine-rich repeat-containing G-protein coupled receptor 5 (LGR5) from Bos taurus (Bovine).